Consider the following 633-residue polypeptide: Extracellular metalloproteinase 5 (633 aa).

Positions methionine 1–histidine 21 are cleaved as a signal peptide. Residues proline 22–alanine 245 constitute a propeptide that is removed on maturation. N-linked (GlcNAc...) asparagine glycosylation occurs at asparagine 285. Histidine 428 contacts Zn(2+). Glutamate 429 is an active-site residue. Histidine 432 is a binding site for Zn(2+). N-linked (GlcNAc...) asparagine glycans are attached at residues asparagine 592 and asparagine 621.

The protein belongs to the peptidase M36 family. The cofactor is Zn(2+).

The protein resides in the secreted. Its function is as follows. Secreted metalloproteinase probably acting as a virulence factor. The protein is Extracellular metalloproteinase 5 (MEP5) of Trichophyton rubrum (Athlete's foot fungus).